We begin with the raw amino-acid sequence, 344 residues long: Holliday junction branch migration complex subunit RuvB (344 aa).

Positions 1-181 are large ATPase domain (RuvB-L); sequence MERIVTPAEM…FGVLCAMEYY (181 aa). ATP contacts are provided by residues Leu20, Arg21, Gly62, Lys65, Thr66, Thr67, 128-130, Arg171, Tyr181, and Arg218; that span reads EDY. Thr66 contacts Mg(2+). Residues 182 to 252 are small ATPAse domain (RuvB-S); sequence DENQLKEIVI…EAREALELLE (71 aa). Residues 255–344 form a head domain (RuvB-H) region; it reads NQGFDKVDNK…SNKGQTSFFK (90 aa). DNA is bound by residues Arg310 and Arg315.

The protein belongs to the RuvB family. Homohexamer. Forms an RuvA(8)-RuvB(12)-Holliday junction (HJ) complex. HJ DNA is sandwiched between 2 RuvA tetramers; dsDNA enters through RuvA and exits via RuvB. An RuvB hexamer assembles on each DNA strand where it exits the tetramer. Each RuvB hexamer is contacted by two RuvA subunits (via domain III) on 2 adjacent RuvB subunits; this complex drives branch migration. In the full resolvosome a probable DNA-RuvA(4)-RuvB(12)-RuvC(2) complex forms which resolves the HJ.

The protein resides in the cytoplasm. The enzyme catalyses ATP + H2O = ADP + phosphate + H(+). In terms of biological role, the RuvA-RuvB-RuvC complex processes Holliday junction (HJ) DNA during genetic recombination and DNA repair, while the RuvA-RuvB complex plays an important role in the rescue of blocked DNA replication forks via replication fork reversal (RFR). RuvA specifically binds to HJ cruciform DNA, conferring on it an open structure. The RuvB hexamer acts as an ATP-dependent pump, pulling dsDNA into and through the RuvAB complex. RuvB forms 2 homohexamers on either side of HJ DNA bound by 1 or 2 RuvA tetramers; 4 subunits per hexamer contact DNA at a time. Coordinated motions by a converter formed by DNA-disengaged RuvB subunits stimulates ATP hydrolysis and nucleotide exchange. Immobilization of the converter enables RuvB to convert the ATP-contained energy into a lever motion, pulling 2 nucleotides of DNA out of the RuvA tetramer per ATP hydrolyzed, thus driving DNA branch migration. The RuvB motors rotate together with the DNA substrate, which together with the progressing nucleotide cycle form the mechanistic basis for DNA recombination by continuous HJ branch migration. Branch migration allows RuvC to scan DNA until it finds its consensus sequence, where it cleaves and resolves cruciform DNA. In Clostridium botulinum (strain Alaska E43 / Type E3), this protein is Holliday junction branch migration complex subunit RuvB.